We begin with the raw amino-acid sequence, 72 residues long: Probable neurotoxin pcD-996 (72 aa).

A signal peptide spans 1–19 (MNYLVMISFALLLVIGVES). The LCN-type CS-alpha/beta domain occupies 21-72 (RDGYFVEPDNCLVYCMPSPEICDRGCKRYGATSGFCKEFSKGENFCWCKGLR). 3 cysteine pairs are disulfide-bonded: Cys35/Cys56, Cys42/Cys66, and Cys46/Cys68. Position 72 (Arg72) is a propeptide, removed by a carboxypeptidase.

The protein belongs to the long (3 C-C) scorpion toxin superfamily. Expressed by the venom gland.

It localises to the secreted. This Androctonus australis (Sahara scorpion) protein is Probable neurotoxin pcD-996.